Consider the following 303-residue polypeptide: Mycothiol acetyltransferase (303 aa).

2 consecutive N-acetyltransferase domains span residues 3 to 152 and 155 to 303; these read VTVT…VSLP and VRIR…MYRS. D35 provides a ligand contact to 1D-myo-inositol 2-(L-cysteinylamino)-2-deoxy-alpha-D-glucopyranoside. 79-81 serves as a coordination point for acetyl-CoA; sequence LTV. 1D-myo-inositol 2-(L-cysteinylamino)-2-deoxy-alpha-D-glucopyranoside contacts are provided by E182, K224, and E237. Acetyl-CoA contacts are provided by residues 241 to 243 and 248 to 254; these read VGV and QGSGLGR. Residue Y275 coordinates 1D-myo-inositol 2-(L-cysteinylamino)-2-deoxy-alpha-D-glucopyranoside.

Belongs to the acetyltransferase family. MshD subfamily. As to quaternary structure, monomer.

It catalyses the reaction 1D-myo-inositol 2-(L-cysteinylamino)-2-deoxy-alpha-D-glucopyranoside + acetyl-CoA = mycothiol + CoA + H(+). Catalyzes the transfer of acetyl from acetyl-CoA to desacetylmycothiol (Cys-GlcN-Ins) to form mycothiol. The polypeptide is Mycothiol acetyltransferase (Kocuria rhizophila (strain ATCC 9341 / DSM 348 / NBRC 103217 / DC2201)).